Reading from the N-terminus, the 269-residue chain is Extracellular metalloprotease UREG_07765 (269 aa).

The N-terminal stretch at 1-18 is a signal peptide; the sequence is MRLSVSLLALAFGSLVAA. Asparagine 179 carries N-linked (GlcNAc...) asparagine glycosylation. Residue histidine 191 participates in Zn(2+) binding. Glutamate 192 is an active-site residue. Histidine 195 provides a ligand contact to Zn(2+). Residues 207-227 form a disordered region; sequence VSDTPPQRSSTQGCPSSRDSC. Positions 210–225 are enriched in polar residues; it reads TPPQRSSTQGCPSSRD. Cysteine 220 and cysteine 246 are oxidised to a cystine.

It belongs to the peptidase M43B family.

The protein resides in the secreted. In terms of biological role, secreted metalloproteinase that allows assimilation of proteinaceous substrates. This is Extracellular metalloprotease UREG_07765 from Uncinocarpus reesii (strain UAMH 1704).